A 428-amino-acid chain; its full sequence is Folylpolyglutamate synthase (428 aa).

49 to 52 (GKGS) serves as a coordination point for ATP. Serine 73 serves as a coordination point for Mg(2+). Residues phenylalanine 75 and arginine 82 each coordinate (6R)-5,10-methylenetetrahydrofolyl-(gamma-L-Glu)n. Mg(2+)-binding residues include glutamate 143 and histidine 170. Lysine 185 bears the N6-carboxylysine mark. ATP contacts are provided by residues asparagine 264, arginine 300, and 313-316 (DGAH). Serine 417 is a binding site for (6R)-5,10-methylenetetrahydrofolyl-(gamma-L-Glu)n.

This sequence belongs to the folylpolyglutamate synthase family. In terms of assembly, monomer. Requires Mg(2+) as cofactor.

The enzyme catalyses (6S)-5,6,7,8-tetrahydrofolyl-(gamma-L-Glu)(n) + L-glutamate + ATP = (6S)-5,6,7,8-tetrahydrofolyl-(gamma-L-Glu)(n+1) + ADP + phosphate + H(+). It catalyses the reaction (6R)-5,10-methylenetetrahydrofolyl-(gamma-L-Glu)(n) + L-glutamate + ATP = (6R)-5,10-methylenetetrahydrofolyl-(gamma-L-Glu)(n+1) + ADP + phosphate + H(+). The catalysed reaction is 10-formyltetrahydrofolyl-(gamma-L-Glu)(n) + L-glutamate + ATP = 10-formyltetrahydrofolyl-(gamma-L-Glu)(n+1) + ADP + phosphate + H(+). Competitively inhibited by adenosine 5'-(3-thio)triphosphate and beta,gamma-methylene-ATP. In terms of biological role, involved in the conversion of folates to polyglutamate derivatives, and likely functions in the retention of cellular folate pools. Catalyzes successive MgATP-dependent additions of glutamate to a pteroylmonoglutamate substrate, with a high preference for 5,10-methylenetetrahydrofolate (mTHF). Thus, metabolizes mTHF to the tetraglutamate derivative, but longer glutamate chain length products are not observed. Tetrahydrofolate (H4PteGlu) and 10-formyl-H4PteGlu are poorer folate substrates. In contrast to E.coli FolC, this enzyme does not display dihydrofolate synthase activity. In Lacticaseibacillus casei (Lactobacillus casei), this protein is Folylpolyglutamate synthase.